A 101-amino-acid chain; its full sequence is Gamma-secretase subunit PEN-2 (101 aa).

At 1–17 the chain is on the cytoplasmic side; sequence MNLERVSNEEKLNLCRK. The helical intramembrane region spans 18-36; sequence YYLGGFAFLPFLWLVNIFW. Residues 37 to 57 are Cytoplasmic-facing; that stretch reads FFREAFLVPAYTEQSQIKGYV. Residues 58 to 78 form a helical membrane-spanning segment; the sequence is WRSAVGFLFWVIVLTSWITIF. Topologically, residues 79–101 are lumenal; it reads QIYRPRWGALGDYLSFTIPLGTP.

This sequence belongs to the PEN-2 family. In terms of assembly, the functional gamma-secretase complex is composed of at least four polypeptides: a presenilin homodimer (PSEN1 or PSEN2), nicastrin (NCSTN), APH1 (APH1A or APH1B) and PSENEN. As to expression, widely expressed. Expressed in leukocytes, lung, placenta, small intestine, liver, kidney, spleen thymus, skeletal muscle, heart and brain.

The protein localises to the endoplasmic reticulum membrane. It localises to the golgi apparatus. It is found in the golgi stack membrane. Its subcellular location is the cell membrane. The protein resides in the membrane. Functionally, essential subunit of the gamma-secretase complex, an endoprotease complex that catalyzes the intramembrane cleavage of integral membrane proteins such as Notch receptors and APP (amyloid-beta precursor protein). The gamma-secretase complex plays a role in Notch and Wnt signaling cascades and regulation of downstream processes via its role in processing key regulatory proteins, and by regulating cytosolic CTNNB1 levels. PSENEN modulates both endoproteolysis of presenilin and gamma-secretase activity. The protein is Gamma-secretase subunit PEN-2 (PSENEN) of Homo sapiens (Human).